The primary structure comprises 198 residues: MADQRQRSLSTSGESLYHVLGLDKNATSDDIKKSYRKLALKYHPDKNPDNPEAADKFKEINNAHAILTDATKRNIYDKYGSLGLYVAEQFGEENVNTYFVLSSWWAKALFVFCGLLTCCYCCCCLCCCFNCCCGKCKPKAPEGEETEFYVSPEDLEAQLQSDEREATDTPIVIQPASATETTQLTADSHPSYHTDGFN.

A phosphoserine mark is found at Ser-8, Ser-10, Ser-12, and Ser-15. One can recognise a J domain in the interval 13–82 (GESLYHVLGL…RNIYDKYGSL (70 aa)). At Tyr-17 the chain carries Phosphotyrosine. Residue Lys-56 is modified to N6-acetyllysine. Position 151 is a phosphoserine (Ser-151).

Oligomers. Homodimer. Interacts with the chaperone complex consisting of HSC70 and SGTA. Interacts with ZDHHC13 (via ANK repeats). Interacts with ZDHHC17 (via ANK repeats). Interacts with SYT1, SYT5 and SYT7, and with SYT9, forming a complex with SNAP25. In terms of processing, ser-10 phosphorylation induces an order-to-disorder transition triggering the interaction with Lys-58. This conformational switch modulates DNAJC5's cellular functions by reducing binding to syntaxin and synaptogamin without altering HSC70 interactions. Palmitoylated. Could be palmitoylated by DHHC3, DHHC7, DHHC15 and DHHC17. Palmitoylation occurs probably in the cysteine-rich domain and regulates DNAJC5 membrane attachment. In terms of tissue distribution, expressed in pancreas, kidney, skeletal muscle, liver, lung, placenta, brain and heart.

It localises to the cytoplasm. It is found in the cytosol. The protein localises to the membrane. Its subcellular location is the cytoplasmic vesicle. The protein resides in the secretory vesicle. It localises to the chromaffin granule membrane. It is found in the melanosome. The protein localises to the cell membrane. Acts as a general chaperone in regulated exocytosis. Acts as a co-chaperone for the SNARE protein SNAP-25. Involved in the calcium-mediated control of a late stage of exocytosis. May have an important role in presynaptic function. May be involved in calcium-dependent neurotransmitter release at nerve endings. The polypeptide is DnaJ homolog subfamily C member 5 (Homo sapiens (Human)).